We begin with the raw amino-acid sequence, 514 residues long: Deoxynucleoside triphosphate triphosphohydrolase SAMHD1 homolog (514 aa).

Positions 1–24 (MNNTFKYVNEDVSGTEGEESDYDP) are disordered. K80 provides a ligand contact to GTP. Residue N83 coordinates a 2'-deoxyribonucleoside 5'-triphosphate. Residue 101–109 (DTEQFQRLR) coordinates GTP. Substrate contacts are provided by Q113 and R128. An HD domain is found at 128–259 (RFEHSIGVSH…SVDVDKFDYL (132 aa)). Zn(2+)-binding residues include H131, H170, and D171. A substrate-binding site is contributed by H174. The active site involves H196. Residues 252–258 (DVDKFDY), Y258, and D262 contribute to the substrate site. D254 contacts Zn(2+). A 2'-deoxyribonucleoside 5'-triphosphate-binding positions include R276, 291–293 (LSK), and N297. Substrate-binding positions include R305 and 309-314 (HKLVYT). H315 and K316 together coordinate a 2'-deoxyribonucleoside 5'-triphosphate. Residues R380 and K384 each contribute to the GTP site.

This sequence belongs to the SAMHD1 family. In terms of assembly, homodimer; in absence of GTP and dNTP. Homotetramer; in GTP- and dNTP-bound form. It depends on Zn(2+) as a cofactor.

The enzyme catalyses a 2'-deoxyribonucleoside 5'-triphosphate + H2O = a 2'-deoxyribonucleoside + triphosphate + H(+). Allosterically activated and regulated via the combined actions of GTP and dNTPs (dATP, dGTP, dTTP and dCTP): Allosteric site 1 binds GTP, while allosteric site 2 binds dNTP. Allosteric activation promotes the formation of highly active homotetramers. In terms of biological role, has deoxynucleoside triphosphate (dNTPase) activity. The chain is Deoxynucleoside triphosphate triphosphohydrolase SAMHD1 homolog from Dictyostelium discoideum (Social amoeba).